The chain runs to 318 residues: Ubiquitin-like domain-containing CTD phosphatase 1 (318 aa).

The region spanning 3 to 81 is the Ubiquitin-like domain; the sequence is VSVIIKWGGQ…IMMMGTREES (79 aa). Residues 133–294 enclose the FCP1 homology domain; that stretch reads PRPGKRLLVL…YKLSQYLKEI (162 aa). Mg(2+)-binding residues include aspartate 143, aspartate 145, and aspartate 253.

Mg(2+) serves as cofactor.

It localises to the nucleus. It carries out the reaction O-phospho-L-seryl-[protein] + H2O = L-seryl-[protein] + phosphate. The enzyme catalyses O-phospho-L-threonyl-[protein] + H2O = L-threonyl-[protein] + phosphate. Its function is as follows. Dephosphorylates 26S nuclear proteasomes, thereby decreasing their proteolytic activity. Recruited to the 19S regulatory particle of the 26S proteasome where it dephosphorylates 19S component psmc2 which impairs psmc2 ATPase activity and disrupts 26S proteasome assembly. Has also been reported to stimulate the proteolytic activity of the 26S proteasome. This is Ubiquitin-like domain-containing CTD phosphatase 1 (ublcp1) from Danio rerio (Zebrafish).